Consider the following 752-residue polypeptide: MGFTLLIDNYDSFTWNIYADLASVGGNPYVVRNDKITLKEIEGMFSDGELERIVISPGPGHPRTDSGVSRDVIAWGMGKLPILGVCMGLECIVDLLGGEIAYAGEIKHGKTSLVQHDSIGVFHNLPQFLSSTRYHSLSAQIQSLPSVLQVTSTTKESGVIMGVRHRTYTVEAVQYHPESCMSEGGRGLMANFIQMKGGKWGGENAWCGVPAEGEEEQPKAKTNGAPSLPTILNRIHAQRLLDVEQAEKVPATSPANVSTSLSLYASPPLINFRDRMVSTPHTAVMAEIKRASPSKGDIAPTASAPEQALKYALAGASVISVLTEPTWFKGSLLDMLAVRNAVDSLPNRPAILRKDFVLSKYMIDEARLYGADTVLLIVAMLEPQQLKELYDYSVSLGMEPLVEVNNPTELSLALEIGSKVIGVNNRNLHDFNVDMSTTSRVNAALNGRDVVLCALSGISSHEDVEKYVKEGVKGVLVGEALMRASDTKAFLRSLIGLPPLEVVPKSRPLVKICGIRSTDDAKLAISAGADLLGVILVPGTKRCISTSTAREISALVQSARSQSSSKPLEPSLSSPWFTTQSDLLSSRRKPLLVGVFQNQSLSDILSAVEEIGLDLVQLHGDEPQAWAKFIPVPVVKVFRVSPEGIVRGGEFRRPGLNQAILLDAGGVSGGGGEGKAFPWEHAKRLIQSGEVGSEGHMPLPVILAGGLTPENVGQAIEQAGEGVWCVDVSSGVEGEGGKVKEKVEAFVKAVRG.

A Glutamine amidotransferase type-1 domain is found at 3–202; it reads FTLLIDNYDS…IQMKGGKWGG (200 aa). 58–60 is an L-glutamine binding site; the sequence is GPG. Cysteine 86 (nucleophile; for GATase activity) is an active-site residue. 136–137 serves as a coordination point for L-glutamine; the sequence is SL. Residues histidine 176 and glutamate 178 each act as for GATase activity in the active site. The tract at residues 231–495 is indole-3-glycerol phosphate synthase; the sequence is ILNRIHAQRL…DTKAFLRSLI (265 aa). Positions 509 to 752 are N-(5'-phosphoribosyl)anthranilate isomerase; it reads LVKICGIRST…VEAFVKAVRG (244 aa).

The enzyme catalyses N-(5-phospho-beta-D-ribosyl)anthranilate = 1-(2-carboxyphenylamino)-1-deoxy-D-ribulose 5-phosphate. It catalyses the reaction 1-(2-carboxyphenylamino)-1-deoxy-D-ribulose 5-phosphate + H(+) = (1S,2R)-1-C-(indol-3-yl)glycerol 3-phosphate + CO2 + H2O. It carries out the reaction chorismate + L-glutamine = anthranilate + pyruvate + L-glutamate + H(+). It participates in amino-acid biosynthesis; L-tryptophan biosynthesis; L-tryptophan from chorismate: step 1/5. Its pathway is amino-acid biosynthesis; L-tryptophan biosynthesis; L-tryptophan from chorismate: step 3/5. It functions in the pathway amino-acid biosynthesis; L-tryptophan biosynthesis; L-tryptophan from chorismate: step 4/5. Trifunctional enzyme bearing the Gln amidotransferase (GATase) domain of anthranilate synthase, indole-glycerolphosphate synthase, and phosphoribosylanthranilate isomerase activities. The protein is Multifunctional tryptophan biosynthesis protein (TRP1) of Cryptococcus neoformans var. neoformans serotype D (strain JEC21 / ATCC MYA-565) (Filobasidiella neoformans).